We begin with the raw amino-acid sequence, 172 residues long: RNA pyrophosphohydrolase (172 aa).

Residues Q8 to A153 form the Nudix hydrolase domain. The Nudix box motif lies at G43–G64.

It belongs to the Nudix hydrolase family. RppH subfamily. A divalent metal cation serves as cofactor.

Its function is as follows. Accelerates the degradation of transcripts by removing pyrophosphate from the 5'-end of triphosphorylated RNA, leading to a more labile monophosphorylated state that can stimulate subsequent ribonuclease cleavage. The polypeptide is RNA pyrophosphohydrolase (Caulobacter vibrioides (strain ATCC 19089 / CIP 103742 / CB 15) (Caulobacter crescentus)).